A 104-amino-acid chain; its full sequence is MRDPLFKGCTRPAMLMGVPATPLAVCSGTIALLGIWFSIAFLALFPVALLAMRIMIRRDDQQFRLIWLYLRMRWLSRDRTHAFWQSTVYAPLRYAERRRRLRKP.

Residues 30-50 traverse the membrane as a helical segment; that stretch reads IALLGIWFSIAFLALFPVALL.

This sequence belongs to the virB3 family.

Its subcellular location is the cell membrane. This Bordetella parapertussis (strain 12822 / ATCC BAA-587 / NCTC 13253) protein is Type IV secretion system protein PtlB homolog (ptlB).